We begin with the raw amino-acid sequence, 57 residues long: uncharacterized protein (57 aa).

In terms of biological role, proetin of unknown function whose overexpression causes growth inhibition. Overexpression increases the expression of ergosterol synthesis genes. This is an uncharacterized protein from Saccharomyces cerevisiae (strain ATCC 204508 / S288c) (Baker's yeast).